Consider the following 567-residue polypeptide: DNA ligase (567 aa).

Residue glutamate 246 participates in ATP binding. Lysine 248 acts as the N6-AMP-lysine intermediate in catalysis. 6 residues coordinate ATP: arginine 253, arginine 268, glutamate 298, phenylalanine 339, arginine 415, and lysine 421.

Belongs to the ATP-dependent DNA ligase family. Requires Mg(2+) as cofactor.

The enzyme catalyses ATP + (deoxyribonucleotide)n-3'-hydroxyl + 5'-phospho-(deoxyribonucleotide)m = (deoxyribonucleotide)n+m + AMP + diphosphate.. Functionally, DNA ligase that seals nicks in double-stranded DNA during DNA replication, DNA recombination and DNA repair. This is DNA ligase from Nanoarchaeum equitans (strain Kin4-M).